Here is a 643-residue protein sequence, read N- to C-terminus: E3 ubiquitin-protein ligase AMFR (643 aa).

A disordered region spans residues 39–67; it reads PEAGPGEPDQLTASLQPEPPAPARPSAGG. The next 6 membrane-spanning stretches (helical) occupy residues 82 to 102, 122 to 142, 145 to 165, 186 to 206, 215 to 235, and 276 to 296; these read LFVW…AKLI, FWNF…VQTV, VVMW…VQLC, VLSL…VCSI, TLAF…HVIL, and HIHM…VIFM. An RING-type zinc finger spans residues 341 to 379; the sequence is CAICWDSMQAARKLPCGHLFHNSCLRSWLEQDTSCPTCR. Residues 429–449 traverse the membrane as a helical segment; the sequence is IASWLPSFSVEVMHTTNILGI. The 43-residue stretch at 456–498 folds into the CUE domain; sequence QLNAMAHQIQEMFPQVPYHLVLQDLQLTRSVEITTDNILEGRI. Disordered regions lie at residues 504-579 and 596-624; these read TQRS…DERQ and RFLN…PVTL. A phosphoserine mark is found at S516, S523, and S542. A compositionally biased stretch (acidic residues) spans 548 to 563; that stretch reads TLDFGEVEVEPSEVED. The segment covering 564-579 has biased composition (basic and acidic residues); sequence FEARGSRFSKSADERQ. A VCP/p97-interacting motif (VIM) region spans residues 622–640; it reads VTLRRRMLAAAAERRLQKQ.

As to quaternary structure, interacts with RNF5. Also forms an ERAD complex containing VCP/p97, NGLY1; PSMC1; SAKS1 and RAD23B required for coupling retrotranslocation, ubiquitination and deglycosylation. Interacts with DERL1. Interacts (through a region distinct from the RING finger) with UBE2G2/UBC7. Component of the VCP/p97-AMFR/gp78 complex that enhances VCP/p97 binding to polyubiquitinated proteins for their degradation by the endoplasmic reticulum-associated degradation (ERAD) pathway. Interacts (via the VIM) with VCP/p97. Interacts (via its membrane domain) with INSIG1; the interaction initiates the sterol-mediated ubiquitination and degradation of HMGCR by the ERAD pathway. Interacts with AUP1, UBE2G2 and RNF139/TRC8; interaction with AUP1 facilitates interaction of AMFR with ubiquitin-conjugating enzyme UBE2G2 and ubiquitin ligase RNF139, leading to sterol-induced ubiquitination of HMGCR and its subsequent proteasomal degradation. Interacts with BAG6. Interacts with USP13 (via UBA 2 domain); the interaction is direct. Interacts with LMBR1L. Interacts with UBAC2 and CTNNB1. Interacts with C18orf32. (Microbial infection) Interacts with Staphylococcus aureus HIgB; this interaction regulates AMFR-mediated inflammation by promoting TAB3 ubiquitination to promote TAB3-TAK1 complex formation. Palmitoylation of the RING-type zing finger by ZDHHC6 promotes localization to the peripheral endoplasmic reticulum. Widely expressed.

The protein localises to the endoplasmic reticulum membrane. It catalyses the reaction [E2 ubiquitin-conjugating enzyme]-S-ubiquitinyl-L-cysteine + [acceptor protein]-L-cysteine = [E2 ubiquitin-conjugating enzyme]-L-cysteine + [acceptor protein]-S-ubiquitinyl-L-cysteine.. It functions in the pathway protein modification; protein ubiquitination. E3 ubiquitin-protein ligase that mediates the polyubiquitination of lysine and cysteine residues on target proteins, such as CD3D, CYP3A4, CFTR, INSIG1, SOAT2/ACAT2 and APOB for proteasomal degradation. Component of a VCP/p97-AMFR/gp78 complex that participates in the final step of endoplasmic reticulum-associated degradation (ERAD). The VCP/p97-AMFR/gp78 complex is involved in the sterol-accelerated ERAD degradation of HMGCR through binding to the HMGCR-INSIG1 complex at the ER membrane. In addition, interaction of AMFR with AUP1 facilitates interaction of AMFR with ubiquitin-conjugating enzyme UBE2G2 and ubiquitin ligase RNF139, leading to sterol-induced HMGCR ubiquitination. The ubiquitinated HMGCR is then released from the ER into the cytosol for subsequent destruction. In addition to ubiquitination on lysine residues, catalyzes ubiquitination on cysteine residues: together with INSIG1, mediates polyubiquitination of SOAT2/ACAT2 at 'Cys-277', leading to its degradation when the lipid levels are low. Catalyzes ubiquitination and subsequent degradation of INSIG1 when cells are depleted of sterols. Mediates polyubiquitination of INSIG2 at 'Cys-215' in some tissues, leading to its degradation. Also regulates ERAD through the ubiquitination of UBL4A a component of the BAG6/BAT3 complex. Also acts as a scaffold protein to assemble a complex that couples ubiquitination, retranslocation and deglycosylation. Mediates tumor invasion and metastasis as a receptor for the GPI/autocrine motility factor. In association with LMBR1L and UBAC2, negatively regulates the canonical Wnt signaling pathway in the lymphocytes by promoting the ubiquitin-mediated degradation of CTNNB1 and Wnt receptors FZD6 and LRP6. Regulates NF-kappa-B and MAPK signaling pathways by mediating 'Lys-27'-linked polyubiquitination of TAB3 and promoting subsequent TAK1/MAP3K7 activation. Required for proper lipid homeostasis. The sequence is that of E3 ubiquitin-protein ligase AMFR from Homo sapiens (Human).